A 335-amino-acid chain; its full sequence is MAIYTRTGDAGTTALFTGQRVSKTHPRVEAYGTLDELNAALSLCVCAAKNPQHRQLLENIQLQLFWFSAELASESEQPAPEQRYISSEEIAALEAAIDTAMGRVPPLRSFILPGRSEAASRLHFARTLARRAERRLVELSTEISVRHVLMRYINRLSDCLYALARAEDHDAHQNNIIQKVAERYLAAIRTSATREPAMSLSFQELHQLTRAAVMRAEELQVPVVISIVDANGTQTVTWRMPDALLVSSELAPKKAWTAVAMKTATHELTSAVQPGAALYGLESHMQGKVVTFGGGYALWREGLLLGGLGISGGSVEQDMDIAETAIAAINVRTHQ.

Residue His206 coordinates heme.

The protein belongs to the Cob(I)alamin adenosyltransferase family. PduO subfamily. Forms a complex with PduS. Heme b is required as a cofactor. Mg(2+) serves as cofactor.

The protein localises to the bacterial microcompartment. The catalysed reaction is cob(I)alamin-[corrinoid adenosyltransferase] + ATP = apo-[corrinoid adenosyltransferase] + adenosylcob(III)alamin + triphosphate. It functions in the pathway polyol metabolism; 1,2-propanediol degradation. Its pathway is cofactor biosynthesis; adenosylcobalamin biosynthesis. Converts cob(I)alamin to adenosylcobalamin (adenosylcob(III)alamin), the cofactor for propanediol dehydratase. Found in the bacterial microcompartment (BMC) dedicated to 1,2-propanediol (1,2-PD) degradation. PduS and PduO allow regeneration of the adenosylcobalamin cofactor within the BMC. In terms of biological role, expression of a cosmid containing the full 21-gene pdu operon in E.coli allows E.coli to grow on 1,2-propanediol (1,2-PD) with the appearance of bacterial microcompartments (BMC) in its cytoplasm. Its function is as follows. The 1,2-PD-specific bacterial microcompartment (BMC) concentrates low levels of 1,2-PD catabolic enzymes, concentrates volatile reaction intermediates thus enhancing pathway flux and keeps the level of toxic, mutagenic propionaldehyde low. The polypeptide is Corrinoid adenosyltransferase PduO (Citrobacter freundii).